Reading from the N-terminus, the 361-residue chain is Peptide chain release factor 1 (361 aa).

Q236 is modified (N5-methylglutamine).

It belongs to the prokaryotic/mitochondrial release factor family. Methylated by PrmC. Methylation increases the termination efficiency of RF1.

It is found in the cytoplasm. In terms of biological role, peptide chain release factor 1 directs the termination of translation in response to the peptide chain termination codons UAG and UAA. This chain is Peptide chain release factor 1, found in Lactobacillus delbrueckii subsp. bulgaricus (strain ATCC BAA-365 / Lb-18).